Consider the following 559-residue polypeptide: Formate--tetrahydrofolate ligase (559 aa).

ATP is bound at residue 68 to 75 (TPAGEGKT).

It belongs to the formate--tetrahydrofolate ligase family.

The enzyme catalyses (6S)-5,6,7,8-tetrahydrofolate + formate + ATP = (6R)-10-formyltetrahydrofolate + ADP + phosphate. The protein operates within one-carbon metabolism; tetrahydrofolate interconversion. The sequence is that of Formate--tetrahydrofolate ligase from Rhizobium johnstonii (strain DSM 114642 / LMG 32736 / 3841) (Rhizobium leguminosarum bv. viciae).